The chain runs to 648 residues: cAMP-dependent protein kinase catalytic subunit (648 aa).

Low complexity-rich tracts occupy residues 1–20, 46–67, 136–175, and 232–254; these read MSNS…TINN, SGNN…NSSG, QQQP…PQQQ, and NTPS…NPHT. Disordered stretches follow at residues 1-25, 40-86, 121-175, and 219-290; these read MSNS…KVNV, GGGG…TKMD, KVPS…PQQQ, and QQQQ…DTNP. Polar residues predominate over residues 255–290; the sequence is SGLSLQHAHSSYTPSNVLHSPTHFQSSLPTRLDTNP. Residues 336 to 590 enclose the Protein kinase domain; the sequence is FKQIRVIGTG…ALDVKNHRWF (255 aa). ATP contacts are provided by residues 342–350 and Lys-365; that span reads IGTGTFGKV. Asp-459 functions as the Proton acceptor in the catalytic mechanism. Thr-490 bears the Phosphothreonine mark. One can recognise an AGC-kinase C-terminal domain in the interval 591-648; it reads SDINWERLYQRRDNGPFIPKIQHQGDSSNFEMYDEEEMVEEPPSSNYVDPYAHLFKDF.

It belongs to the protein kinase superfamily. AGC Ser/Thr protein kinase family. cAMP subfamily. In Dictyostelium the holoenzyme is a dimer composed of a regulatory (R) and a catalytic (C) subunit. In the presence of cAMP it dissociates into the active C subunit and an R monomer.

The catalysed reaction is L-seryl-[protein] + ATP = O-phospho-L-seryl-[protein] + ADP + H(+). It carries out the reaction L-threonyl-[protein] + ATP = O-phospho-L-threonyl-[protein] + ADP + H(+). In terms of biological role, essential for differentiation and fruit morphogenesis. This is cAMP-dependent protein kinase catalytic subunit (pkaC) from Dictyostelium discoideum (Social amoeba).